We begin with the raw amino-acid sequence, 140 residues long: Large ribosomal subunit protein uL16 (140 aa).

The span at Met1–Lys14 shows a compositional bias: basic residues. The disordered stretch occupies residues Met1–Thr20.

The protein belongs to the universal ribosomal protein uL16 family. In terms of assembly, part of the 50S ribosomal subunit.

In terms of biological role, binds 23S rRNA and is also seen to make contacts with the A and possibly P site tRNAs. This Geotalea daltonii (strain DSM 22248 / JCM 15807 / FRC-32) (Geobacter daltonii) protein is Large ribosomal subunit protein uL16.